The primary structure comprises 372 residues: UDP-N-acetylglucosamine--N-acetylmuramyl-(pentapeptide) pyrophosphoryl-undecaprenol N-acetylglucosamine transferase (372 aa).

UDP-N-acetyl-alpha-D-glucosamine-binding positions include 15-17 (TGG), Asn-126, Arg-169, Ser-197, and Gln-299.

The protein belongs to the glycosyltransferase 28 family. MurG subfamily.

It is found in the cell inner membrane. It carries out the reaction di-trans,octa-cis-undecaprenyl diphospho-N-acetyl-alpha-D-muramoyl-L-alanyl-D-glutamyl-meso-2,6-diaminopimeloyl-D-alanyl-D-alanine + UDP-N-acetyl-alpha-D-glucosamine = di-trans,octa-cis-undecaprenyl diphospho-[N-acetyl-alpha-D-glucosaminyl-(1-&gt;4)]-N-acetyl-alpha-D-muramoyl-L-alanyl-D-glutamyl-meso-2,6-diaminopimeloyl-D-alanyl-D-alanine + UDP + H(+). It participates in cell wall biogenesis; peptidoglycan biosynthesis. In terms of biological role, cell wall formation. Catalyzes the transfer of a GlcNAc subunit on undecaprenyl-pyrophosphoryl-MurNAc-pentapeptide (lipid intermediate I) to form undecaprenyl-pyrophosphoryl-MurNAc-(pentapeptide)GlcNAc (lipid intermediate II). The sequence is that of UDP-N-acetylglucosamine--N-acetylmuramyl-(pentapeptide) pyrophosphoryl-undecaprenol N-acetylglucosamine transferase from Methylobacterium sp. (strain 4-46).